Here is a 180-residue protein sequence, read N- to C-terminus: MTGLLAFLLIVLEWTRPSLPSPLRPICDLRVLNHFIKEAQDAEAAMKTCREGCTLSESVVVPQTTVDFDVWEKKNASAKAEEVQSGLWLLQQAFNFLRTSVTNAALHSHIDNAVRNLLSVNAVLRSLNIQEFTPQANGAEIEGTWRASSAAELLQVYVNFLRGKARLLLLDAQACQQDVS.

The signal sequence occupies residues 1 to 20 (MTGLLAFLLIVLEWTRPSLP). 2 cysteine pairs are disulfide-bonded: cysteine 27–cysteine 175 and cysteine 49–cysteine 53. Residue asparagine 75 is glycosylated (N-linked (GlcNAc...) asparagine).

Belongs to the EPO/TPO family.

Its subcellular location is the secreted. Its function is as follows. Erythropoietin is the principal hormone involved in the regulation of erythrocyte differentiation and the maintenance of a physiological level of circulating erythrocyte mass. This chain is Erythropoietin (epo), found in Tetraodon nigroviridis (Spotted green pufferfish).